Reading from the N-terminus, the 64-residue chain is Large ribosomal subunit protein bL35 (64 aa).

Residues 1–27 (MPKMKTKSGAKKRFKPTASGFKHKHAF) form a disordered region.

It belongs to the bacterial ribosomal protein bL35 family.

The sequence is that of Large ribosomal subunit protein bL35 from Azotobacter vinelandii (strain DJ / ATCC BAA-1303).